A 439-amino-acid polypeptide reads, in one-letter code: Tol-Pal system protein TolB (439 aa).

The signal sequence occupies residues M1 to T22.

It belongs to the TolB family. As to quaternary structure, the Tol-Pal system is composed of five core proteins: the inner membrane proteins TolA, TolQ and TolR, the periplasmic protein TolB and the outer membrane protein Pal. They form a network linking the inner and outer membranes and the peptidoglycan layer.

The protein resides in the periplasm. Functionally, part of the Tol-Pal system, which plays a role in outer membrane invagination during cell division and is important for maintaining outer membrane integrity. This Xylella fastidiosa (strain Temecula1 / ATCC 700964) protein is Tol-Pal system protein TolB.